The primary structure comprises 724 residues: Probable metal-nicotianamine transporter YSL13 (724 aa).

The interval 1 to 54 (MATVPTPSEAHGGATPTAADVEMVEASELRRRGKPSGDRATGPSRDGAAAAAEE) is disordered. The next 14 helical transmembrane spans lie at 80–100 (AFVV…KLNL), 103–123 (GIIP…VRLW), 148–168 (CVVA…ILSM), 190–210 (LGWI…GLVP), 252–272 (LGIF…YTAT), 310–330 (IVNV…WPLI), 355–375 (VFIA…KMII), 423–443 (IPWY…IGTV), 455–475 (ILVA…GTGL), 487–507 (LAIF…LAGL), 541–561 (FVSQ…VFWL), 603–623 (LNLC…RDLV), 640–660 (FYIG…LFVW), and 675–695 (VASG…VLAL).

It belongs to the YSL (TC 2.A.67.2) family. Expressed in leaves and at low levels in root cortex.

The protein localises to the membrane. May be involved in the transport of nicotianamine-chelated metals. This is Probable metal-nicotianamine transporter YSL13 (YSL13) from Oryza sativa subsp. japonica (Rice).